The following is a 429-amino-acid chain: Argininosuccinate lyase (429 aa).

This sequence belongs to the lyase 1 family. Argininosuccinate lyase subfamily.

It localises to the cytoplasm. It catalyses the reaction 2-(N(omega)-L-arginino)succinate = fumarate + L-arginine. The protein operates within amino-acid biosynthesis; L-arginine biosynthesis; L-arginine from L-ornithine and carbamoyl phosphate: step 3/3. The polypeptide is Argininosuccinate lyase (Pyrobaculum islandicum (strain DSM 4184 / JCM 9189 / GEO3)).